Here is a 437-residue protein sequence, read N- to C-terminus: MMSVTVEILENLERKVVLSLPWSEINAETDKKLKQTQRRAKIDGFRPGKAPLKMIAQMYGASAQNDVINELVQRRFYDVAVAQELKVAGYPRFEGVEEQDDKESFKVAAIFEVFPEVVIGDLSAQEVEKVTASVGDAEVDQTVEILRKQRTRFNHVDREARNGDRVIIDFEGKIDGEPFAGGASKNYAFVLGAGQMLPEFEAGVVGMKAGESKDVTVNFPEEYHGKDVAGKTAVFTITLNNVSEPTLPEVDADFAKALGIADGDVAKMREEVKKNVSREVERRVNEQTKESVMNALIKAVELKVPVALVNEEAARLANEMKQNFVNQGMTDAANLDLPLDMFKEQAERRVSLGLILAKLVDENKLEPTEEQIKAVVANFAESYEDPQEVIDWYYADTSRLQAPTSLAVESNVVDFVLGKAKVNKKALSFDEVMGAQA.

Residues 163–248 (GDRVIIDFEG…LNNVSEPTLP (86 aa)) form the PPIase FKBP-type domain.

The protein belongs to the FKBP-type PPIase family. Tig subfamily.

It is found in the cytoplasm. The enzyme catalyses [protein]-peptidylproline (omega=180) = [protein]-peptidylproline (omega=0). In terms of biological role, involved in protein export. Acts as a chaperone by maintaining the newly synthesized protein in an open conformation. Functions as a peptidyl-prolyl cis-trans isomerase. The chain is Trigger factor from Neisseria gonorrhoeae (strain NCCP11945).